We begin with the raw amino-acid sequence, 344 residues long: Phosphoribosylformylglycinamidine cyclo-ligase (344 aa).

This sequence belongs to the AIR synthase family.

The protein resides in the cytoplasm. The catalysed reaction is 2-formamido-N(1)-(5-O-phospho-beta-D-ribosyl)acetamidine + ATP = 5-amino-1-(5-phospho-beta-D-ribosyl)imidazole + ADP + phosphate + H(+). Its pathway is purine metabolism; IMP biosynthesis via de novo pathway; 5-amino-1-(5-phospho-D-ribosyl)imidazole from N(2)-formyl-N(1)-(5-phospho-D-ribosyl)glycinamide: step 2/2. This is Phosphoribosylformylglycinamidine cyclo-ligase from Neisseria meningitidis serogroup C (strain 053442).